The sequence spans 295 residues: UDP-3-O-acyl-N-acetylglucosamine deacetylase (295 aa).

Zn(2+) contacts are provided by His75, His232, and Asp236. His259 acts as the Proton donor in catalysis.

It belongs to the LpxC family. The cofactor is Zn(2+).

It catalyses the reaction a UDP-3-O-[(3R)-3-hydroxyacyl]-N-acetyl-alpha-D-glucosamine + H2O = a UDP-3-O-[(3R)-3-hydroxyacyl]-alpha-D-glucosamine + acetate. The protein operates within glycolipid biosynthesis; lipid IV(A) biosynthesis; lipid IV(A) from (3R)-3-hydroxytetradecanoyl-[acyl-carrier-protein] and UDP-N-acetyl-alpha-D-glucosamine: step 2/6. Its function is as follows. Catalyzes the hydrolysis of UDP-3-O-myristoyl-N-acetylglucosamine to form UDP-3-O-myristoylglucosamine and acetate, the committed step in lipid A biosynthesis. This chain is UDP-3-O-acyl-N-acetylglucosamine deacetylase, found in Helicobacter pylori (strain J99 / ATCC 700824) (Campylobacter pylori J99).